Here is a 145-residue protein sequence, read N- to C-terminus: D-aminoacyl-tRNA deacylase (145 aa).

Residues 137-138 (GP) carry the Gly-cisPro motif, important for rejection of L-amino acids motif.

Belongs to the DTD family. Homodimer.

It is found in the cytoplasm. The enzyme catalyses glycyl-tRNA(Ala) + H2O = tRNA(Ala) + glycine + H(+). The catalysed reaction is a D-aminoacyl-tRNA + H2O = a tRNA + a D-alpha-amino acid + H(+). Functionally, an aminoacyl-tRNA editing enzyme that deacylates mischarged D-aminoacyl-tRNAs. Also deacylates mischarged glycyl-tRNA(Ala), protecting cells against glycine mischarging by AlaRS. Acts via tRNA-based rather than protein-based catalysis; rejects L-amino acids rather than detecting D-amino acids in the active site. By recycling D-aminoacyl-tRNA to D-amino acids and free tRNA molecules, this enzyme counteracts the toxicity associated with the formation of D-aminoacyl-tRNA entities in vivo and helps enforce protein L-homochirality. This chain is D-aminoacyl-tRNA deacylase, found in Rhodopirellula baltica (strain DSM 10527 / NCIMB 13988 / SH1).